A 104-amino-acid polypeptide reads, in one-letter code: MAAKIRREDEVIVLAGKDKGKRAKVSQVLPTGKLIVEGINLVKKHQKPNPQLGVAGGIVEKEAPIQASNVAIFNSATGKADRVGFRFEDGKKVRFFKSNSELVK.

This sequence belongs to the universal ribosomal protein uL24 family. In terms of assembly, part of the 50S ribosomal subunit.

Its function is as follows. One of two assembly initiator proteins, it binds directly to the 5'-end of the 23S rRNA, where it nucleates assembly of the 50S subunit. In terms of biological role, one of the proteins that surrounds the polypeptide exit tunnel on the outside of the subunit. This Shewanella baltica (strain OS223) protein is Large ribosomal subunit protein uL24.